Reading from the N-terminus, the 155-residue chain is Small ribosomal subunit protein uS9 (155 aa).

This sequence belongs to the universal ribosomal protein uS9 family.

This chain is Small ribosomal subunit protein uS9, found in Rhizobium meliloti (strain 1021) (Ensifer meliloti).